A 173-amino-acid chain; its full sequence is Crossover junction endodeoxyribonuclease RuvC (173 aa).

Residues Asp8, Glu67, and Asp139 contribute to the active site. Mg(2+) contacts are provided by Asp8, Glu67, and Asp139.

This sequence belongs to the RuvC family. Homodimer which binds Holliday junction (HJ) DNA. The HJ becomes 2-fold symmetrical on binding to RuvC with unstacked arms; it has a different conformation from HJ DNA in complex with RuvA. In the full resolvosome a probable DNA-RuvA(4)-RuvB(12)-RuvC(2) complex forms which resolves the HJ. Requires Mg(2+) as cofactor.

Its subcellular location is the cytoplasm. It carries out the reaction Endonucleolytic cleavage at a junction such as a reciprocal single-stranded crossover between two homologous DNA duplexes (Holliday junction).. In terms of biological role, the RuvA-RuvB-RuvC complex processes Holliday junction (HJ) DNA during genetic recombination and DNA repair. Endonuclease that resolves HJ intermediates. Cleaves cruciform DNA by making single-stranded nicks across the HJ at symmetrical positions within the homologous arms, yielding a 5'-phosphate and a 3'-hydroxyl group; requires a central core of homology in the junction. The consensus cleavage sequence is 5'-(A/T)TT(C/G)-3'. Cleavage occurs on the 3'-side of the TT dinucleotide at the point of strand exchange. HJ branch migration catalyzed by RuvA-RuvB allows RuvC to scan DNA until it finds its consensus sequence, where it cleaves and resolves the cruciform DNA. This Baumannia cicadellinicola subsp. Homalodisca coagulata protein is Crossover junction endodeoxyribonuclease RuvC.